Reading from the N-terminus, the 418-residue chain is Zinc finger protein 566 (418 aa).

Residues 6–77 form the KRAB domain; sequence VMFSDVSVDF…DRELTRGQWP (72 aa). A C2H2-type 1; degenerate zinc finger spans residues 169–193; it reads KFCASKEYRKTFRHGSQFATHEIIH. 7 consecutive C2H2-type zinc fingers follow at residues 199–221, 227–249, 255–277, 283–305, 311–333, 339–361, and 367–389; these read YECK…QKIH, FECK…HRIH, YECK…QRIH, and YECK…HRIH. Glycyl lysine isopeptide (Lys-Gly) (interchain with G-Cter in SUMO2) cross-links involve residues lysine 314 and lysine 328.

This sequence belongs to the krueppel C2H2-type zinc-finger protein family.

Its subcellular location is the nucleus. Functionally, may be involved in transcriptional regulation. This chain is Zinc finger protein 566 (ZNF566), found in Homo sapiens (Human).